Consider the following 188-residue polypeptide: F-box only protein 36 (188 aa).

The F-box domain occupies F91–I137.

As to quaternary structure, directly interacts with SKP1 and CUL1.

Its function is as follows. Substrate-recognition component of the SCF (SKP1-CUL1-F-box protein)-type E3 ubiquitin ligase complex. The protein is F-box only protein 36 (Fbxo36) of Mus musculus (Mouse).